We begin with the raw amino-acid sequence, 270 residues long: Monocyte to macrophage differentiation factor 2 (270 aa).

The Cytoplasmic portion of the chain corresponds to 1 to 38 (MFAPRLLDFQKTKYARFMNHRVPAHKRYQPTEYEHAAN). The helical transmembrane segment at 39–59 (CATHAFWIIPSILGSSNLYFL) threads the bilayer. Residues 60 to 65 (SDDDWE) are Lumenal-facing. Residues 66–86 (TISAWIYGLGLCGLFVVSTVF) traverse the membrane as a helical segment. At 87 to 102 (HTISWKKSHLRMVEHC) the chain is on the cytoplasmic side. The chain crosses the membrane as a helical span at residues 103–123 (LHMFDRMVIYFFIAASYAPWL). At 124-132 (NLRELGPWA) the chain is on the lumenal side. A helical membrane pass occupies residues 133 to 153 (SHMRWLVWIMASVGTIYVFFF). Residues 154 to 182 (HERTGSCVQFLRGEACPKAGTACLPARYK) are Cytoplasmic-facing. Residues 183 to 203 (LVELLCYVVMGFFPALVILSM) traverse the membrane as a helical segment. The Lumenal portion of the chain corresponds to 204 to 205 (PN). Residues 206–226 (TEGIWELVTGGVFYCLGMVFF) form a helical membrane-spanning segment. Topologically, residues 227-233 (KSDGRIP) are cytoplasmic. Residues 234 to 254 (FAHAIWHLFVAFGAGTHYYAI) form a helical membrane-spanning segment. Residues 255–270 (WRYLYLPSTLQTKVSK) are Lumenal-facing.

Belongs to the ADIPOR family. Shows restricted expression with highest levels in brain and testis.

Its subcellular location is the golgi apparatus membrane. The sequence is that of Monocyte to macrophage differentiation factor 2 from Homo sapiens (Human).